Consider the following 104-residue polypeptide: Pole-localizer protein TmaR (104 aa).

Coiled-coil stretches lie at residues 13–43 (RKNK…NLLD) and 76–96 (SAEI…LTEE).

This sequence belongs to the pole-localizer TmaR family.

It localises to the cytoplasm. Functionally, pole-localizer protein involved in the regulation of several cellular processes. The chain is Pole-localizer protein TmaR from Vibrio vulnificus (strain CMCP6).